A 91-amino-acid chain; its full sequence is Non-specific lipid-transfer protein 1 (91 aa).

4 disulfide bridges follow: cysteine 4–cysteine 51, cysteine 14–cysteine 28, cysteine 29–cysteine 74, and cysteine 49–cysteine 88.

Expressed in seeds (at protein level).

Plant non-specific lipid-transfer proteins transfer phospholipids as well as galactolipids across membranes. May play a role in wax or cutin deposition in the cell walls of expanding epidermal cells and certain secretory tissues. Binds to both saturated and unsaturated lipids, with the highest binding efficiency for linoleic acid, followed by linolenic acid. The chain is Non-specific lipid-transfer protein 1 from Foeniculum vulgare (Fennel).